A 716-amino-acid polypeptide reads, in one-letter code: Putative cuticle collagen 99 (716 aa).

2 disordered regions span residues leucine 85–proline 122 and proline 183–alanine 472. 3 triple-helical region regions span residues glycine 179–arginine 238, leucine 265–glutamate 298, and glycine 302–aspartate 330. Residues proline 266–proline 277 show a composition bias toward pro residues. Positions arginine 280–arginine 290 are enriched in basic and acidic residues. Residues proline 349 to proline 358 are compositionally biased toward pro residues. Triple-helical region stretches follow at residues glycine 385–alanine 411 and glycine 422–glycine 467. Residues glutamate 389 to aspartate 401 show a composition bias toward basic and acidic residues. Residues arginine 402–glycine 422 are compositionally biased toward low complexity. Over residues arginine 429–leucine 444 the composition is skewed to basic and acidic residues. The N-linked (GlcNAc...) asparagine glycan is linked to asparagine 474. Residues lysine 503–aspartate 716 are disordered. 3 triple-helical region regions span residues proline 507–alanine 557, glycine 566–proline 603, and glycine 605–aspartate 664. Residues arginine 568–proline 577 show a composition bias toward pro residues.

It belongs to the cuticular collagen family. As to quaternary structure, collagen polypeptide chains are complexed within the cuticle by disulfide bonds and other types of covalent cross-links.

Its function is as follows. Nematode cuticles are composed largely of collagen-like proteins. The cuticle functions both as an exoskeleton and as a barrier to protect the worm from its environment. This is Putative cuticle collagen 99 (col-99) from Caenorhabditis elegans.